The primary structure comprises 529 residues: Variant surface glycoprotein MITAT 1.6 (529 aa).

A signal peptide spans M1–A24. 2 disulfide bridges follow: C39/C170 and C147/C214. The N-linked (GlcNAc...) (high mannose) asparagine glycan is linked to N456. A lipid anchor (GPI-anchor amidated aspartate) is attached at D506. Residues S507–F529 constitute a propeptide, removed in mature form.

N-glycosylated; glycan is composed of 6 to 9 mannose residues.

Its subcellular location is the cell membrane. Its function is as follows. VSG forms a coat on the surface of the parasite. The trypanosome evades the immune response of the host by expressing a series of antigenically distinct VSGs from an estimated 1000 VSG genes. The protein is Variant surface glycoprotein MITAT 1.6 of Trypanosoma brucei brucei.